Consider the following 53-residue polypeptide: Chlorophyll a-b binding protein 1, chloroplastic (53 aa).

A chlorophyll b-binding site is contributed by Phe18. Residues Glu48 and His51 each contribute to the chlorophyll a site. A chlorophyll b-binding site is contributed by Arg53.

Belongs to the light-harvesting chlorophyll a/b-binding (LHC) protein family. As to quaternary structure, the LHC complex consists of chlorophyll a-b binding proteins. Requires Binds at least 14 chlorophylls (8 Chl-a and 6 Chl-b) and carotenoids such as lutein and neoxanthin. as cofactor. Photoregulated by reversible phosphorylation of its threonine residues.

Its subcellular location is the plastid. The protein localises to the chloroplast thylakoid membrane. Its function is as follows. The light-harvesting complex (LHC) functions as a light receptor, it captures and delivers excitation energy to photosystems with which it is closely associated. In Populus euphratica (Euphrates poplar), this protein is Chlorophyll a-b binding protein 1, chloroplastic.